The chain runs to 243 residues: 6-carboxyhexanoate--CoA ligase (243 aa).

The protein belongs to the BioW family. In terms of assembly, homodimer. The cofactor is Mg(2+).

It catalyses the reaction heptanedioate + ATP + CoA = 6-carboxyhexanoyl-CoA + AMP + diphosphate. It functions in the pathway metabolic intermediate metabolism; pimeloyl-CoA biosynthesis; pimeloyl-CoA from pimelate: step 1/1. Functionally, catalyzes the transformation of pimelate into pimeloyl-CoA with concomitant hydrolysis of ATP to AMP. The chain is 6-carboxyhexanoate--CoA ligase from Corynebacterium pseudotuberculosis (strain FRC41).